The following is an 89-amino-acid chain: uncharacterized protein (89 aa).

Positions 1 to 19 (MIVRTLLIAAALLGGTAQA) are cleaved as a signal peptide.

The protein localises to the secreted. This is an uncharacterized protein from Pseudomonas aeruginosa (strain UCBPP-PA14).